The following is a 579-amino-acid chain: Putative laccase-9 (579 aa).

The N-terminal stretch at 1–27 (MGTAKLPALLWLLAGVVLALAVNPAHG) is a signal peptide. 2 Plastocyanin-like domains span residues 36-152 (FITE…PKRG) and 162-319 (KEIP…YTDS). Asn-41 and Asn-82 each carry an N-linked (GlcNAc...) asparagine glycan. Cu cation contacts are provided by His-86 and His-88. Asn-114 carries N-linked (GlcNAc...) asparagine glycosylation. His-131 and His-133 together coordinate Cu cation. Residues Asn-307, Asn-405, and Asn-446 are each glycosylated (N-linked (GlcNAc...) asparagine). Residues 436-563 (PTAFVDPPVN…DTVFIVKDGK (128 aa)) form the Plastocyanin-like 3 domain. Cu cation-binding residues include His-480, His-483, and His-485. An N-linked (GlcNAc...) asparagine glycan is attached at Asn-496. Positions 542, 543, 544, 548, and 553 each coordinate Cu cation.

The protein belongs to the multicopper oxidase family. It depends on Cu cation as a cofactor.

The protein resides in the secreted. It is found in the extracellular space. Its subcellular location is the apoplast. It catalyses the reaction 4 hydroquinone + O2 = 4 benzosemiquinone + 2 H2O. Its function is as follows. Lignin degradation and detoxification of lignin-derived products. The protein is Putative laccase-9 (LAC9) of Oryza sativa subsp. japonica (Rice).